A 693-amino-acid polypeptide reads, in one-letter code: Elongation factor G (693 aa).

The tr-type G domain maps to 8–283; the sequence is NRCRNIGIMA…AVVDYLPSPL (276 aa). GTP-binding positions include 17-24, 81-85, and 135-138; these read AHIDAGKT, DTPGH, and NKMD.

Belongs to the TRAFAC class translation factor GTPase superfamily. Classic translation factor GTPase family. EF-G/EF-2 subfamily.

The protein localises to the cytoplasm. Catalyzes the GTP-dependent ribosomal translocation step during translation elongation. During this step, the ribosome changes from the pre-translocational (PRE) to the post-translocational (POST) state as the newly formed A-site-bound peptidyl-tRNA and P-site-bound deacylated tRNA move to the P and E sites, respectively. Catalyzes the coordinated movement of the two tRNA molecules, the mRNA and conformational changes in the ribosome. The polypeptide is Elongation factor G (Acidobacterium capsulatum (strain ATCC 51196 / DSM 11244 / BCRC 80197 / JCM 7670 / NBRC 15755 / NCIMB 13165 / 161)).